A 546-amino-acid chain; its full sequence is 3-(3-hydroxy-phenyl)propionate/3-hydroxycinnamic acid hydroxylase 2 (546 aa).

FAD-binding positions include 10–39 and 278–288; these read SVAI…VVER and FVAGRIALVGD.

This sequence belongs to the PheA/TfdB FAD monooxygenase family. FAD is required as a cofactor.

It catalyses the reaction 3-(3-hydroxyphenyl)propanoate + NADH + O2 + H(+) = 3-(2,3-dihydroxyphenyl)propanoate + NAD(+) + H2O. The catalysed reaction is (2E)-3-(3-hydroxyphenyl)prop-2-enoate + NADH + O2 + H(+) = (2E)-3-(2,3-dihydroxyphenyl)prop-2-enoate + NAD(+) + H2O. The protein operates within aromatic compound metabolism; 3-phenylpropanoate degradation. Its function is as follows. Catalyzes the insertion of one atom of molecular oxygen into position 2 of the phenyl ring of 3-(3-hydroxyphenyl)propionate (3-HPP) and hydroxycinnamic acid (3HCI). This Burkholderia vietnamiensis (strain G4 / LMG 22486) (Burkholderia cepacia (strain R1808)) protein is 3-(3-hydroxy-phenyl)propionate/3-hydroxycinnamic acid hydroxylase 2.